We begin with the raw amino-acid sequence, 236 residues long: 15,16-dihydrobiliverdin:ferredoxin oxidoreductase (236 aa).

This sequence belongs to the HY2 family.

The enzyme catalyses 15,16-dihydrobiliverdin + oxidized 2[4Fe-4S]-[ferredoxin] = biliverdin IXalpha + reduced 2[4Fe-4S]-[ferredoxin] + 2 H(+). Its function is as follows. Catalyzes the two-electron reduction of biliverdin IX-alpha at the C15 methine bridge. This Prochlorococcus marinus (strain MIT 9312) protein is 15,16-dihydrobiliverdin:ferredoxin oxidoreductase.